The primary structure comprises 281 residues: NADPH-dependent 7-cyano-7-deazaguanine reductase (281 aa).

Substrate is bound at residue 88–90 (IES). 90–91 (SK) is a binding site for NADPH. Residue C189 is the Thioimide intermediate of the active site. D196 acts as the Proton donor in catalysis. Substrate is bound at residue 228-229 (HE). 257–258 (RG) provides a ligand contact to NADPH.

It belongs to the GTP cyclohydrolase I family. QueF type 2 subfamily. In terms of assembly, homodimer.

The protein resides in the cytoplasm. It catalyses the reaction 7-aminomethyl-7-carbaguanine + 2 NADP(+) = 7-cyano-7-deazaguanine + 2 NADPH + 3 H(+). It participates in tRNA modification; tRNA-queuosine biosynthesis. Functionally, catalyzes the NADPH-dependent reduction of 7-cyano-7-deazaguanine (preQ0) to 7-aminomethyl-7-deazaguanine (preQ1). The protein is NADPH-dependent 7-cyano-7-deazaguanine reductase of Erwinia tasmaniensis (strain DSM 17950 / CFBP 7177 / CIP 109463 / NCPPB 4357 / Et1/99).